Reading from the N-terminus, the 183-residue chain is Interleukin-36 beta (183 aa).

The propeptide occupies 1–30 (MMAFPPQSCVHVLPPKSIQMWEPNHNTMHG).

It belongs to the IL-1 family. As to quaternary structure, interacts with cargo receptor TMED10; the interaction mediates the translocation from the cytoplasm into the ERGIC (endoplasmic reticulum-Golgi intermediate compartment) and thereby secretion. Post-translationally, N-terminal truncation leads to a dramatic enhancement of its activity (&gt;1000-fold).

It is found in the cytoplasm. The protein resides in the secreted. In terms of biological role, cytokine that binds to and signals through the IL1RL2/IL-36R receptor which in turn activates NF-kappa-B and MAPK signaling pathways in target cells linked to a pro-inflammatory response. Part of the IL-36 signaling system that is thought to be present in epithelial barriers and to take part in local inflammatory response; similar to the IL-1 system with which it shares the coreceptor IL1RAP. Stimulates production of interleukin-6 and interleukin-8 in synovial fibrobasts, articular chondrocytes and mature adipocytes. Induces expression of a number of antimicrobial peptides including beta-defensin 4 and beta-defensin 103 as well as a number of matrix metalloproteases. Seems to be involved in skin inflammatory response by acting on keratinocytes, dendritic cells and indirectly on T-cells to drive tissue infiltration, cell maturation and cell proliferation. Induces the production of pro-inflammatory cytokines in bone marrow-derived dendritic cells (BMDCs), including IL-12, Il-1 beta, IL-6, TNF-alpha and IL-23, and activates p38 MAPK phosphorylation in BMDCs. Involved in dendritic cell maturation by stimulating the surface expression of CD80, CD86 and MHC class II. Induces the production of IFN-gamma, IL-4 and IL-17 by T-helper 1 (Th1) cells, cultured CD4(+) T-cells and splenocytes. The sequence is that of Interleukin-36 beta from Mus musculus (Mouse).